The sequence spans 412 residues: Adherens junction-associated protein 1 (412 aa).

A signal peptide spans 1-43 (MWIQQLLGLSSMSIRWPGRSLGSHAWILIAMLQLAVDFPSCDS). The Extracellular portion of the chain corresponds to 44–284 (LGPGPEFRLL…GETSGLAVHQ (241 aa)). Disordered regions lie at residues 62-175 (LWSL…GRPT) and 243-271 (DPWK…IQPP). Positions 121-146 (PPAATRSSPSLASATASSSIVTAGAA) are enriched in low complexity. Positions 160-171 (HDTEFNDFDFRG) are enriched in basic and acidic residues. Low complexity predominate over residues 248 to 263 (TPVGVSTTEPSTSPSS). Residues 285–305 (IITITVSLIMVIAALITTLVL) form a helical membrane-spanning segment. The interval 305 to 412 (LKNCCAPSGH…VSEKWFEISC (108 aa)) is targeting signals. Residues 306 to 412 (KNCCAPSGHT…VSEKWFEISC (107 aa)) lie on the Cytoplasmic side of the membrane.

Forms a complex with CDH1 and CTNNB1; interacts directly with CTNNB1. Interacts with AP1M2 and isoform 2 of BSG/CD147.

It is found in the basolateral cell membrane. The protein localises to the apical cell membrane. The protein resides in the cell junction. Its subcellular location is the adherens junction. Its function is as follows. Plays a role in cell adhesion and cell migration. The polypeptide is Adherens junction-associated protein 1 (Ajap1) (Mus musculus (Mouse)).